Here is a 448-residue protein sequence, read N- to C-terminus: Probable D-serine dehydratase (448 aa).

The residue at position 119 (Lys119) is an N6-(pyridoxal phosphate)lysine.

The protein belongs to the serine/threonine dehydratase family. DsdA subfamily. It depends on pyridoxal 5'-phosphate as a cofactor.

It carries out the reaction D-serine = pyruvate + NH4(+). This is Probable D-serine dehydratase from Pseudomonas aeruginosa (strain ATCC 15692 / DSM 22644 / CIP 104116 / JCM 14847 / LMG 12228 / 1C / PRS 101 / PAO1).